A 705-amino-acid polypeptide reads, in one-letter code: Ion-translocating oxidoreductase complex subunit C (705 aa).

4Fe-4S ferredoxin-type domains follow at residues 368 to 397 (MGETPEEQGCIRCSACADACPADLLPQQLY) and 407 to 435 (KATAHNIADCIECGACAWVCPSSIPLVQY). Cys-377, Cys-380, Cys-383, Cys-387, Cys-416, Cys-419, Cys-422, and Cys-426 together coordinate [4Fe-4S] cluster. The disordered stretch occupies residues 536-684 (RARQAENIPA…EPVDPRKAAV (149 aa)).

It belongs to the 4Fe4S bacterial-type ferredoxin family. RnfC subfamily. As to quaternary structure, the complex is composed of six subunits: RnfA, RnfB, RnfC, RnfD, RnfE and RnfG. [4Fe-4S] cluster serves as cofactor.

The protein resides in the cell inner membrane. Functionally, part of a membrane-bound complex that couples electron transfer with translocation of ions across the membrane. In Citrobacter koseri (strain ATCC BAA-895 / CDC 4225-83 / SGSC4696), this protein is Ion-translocating oxidoreductase complex subunit C.